We begin with the raw amino-acid sequence, 398 residues long: MLLEHPGSSCQNAGNYTRYSSSQDIPVCAGCNQHIVDRFILKVLDRHWHSKCLKCSDCQSQLADKCFSRGDSVYCKDDFFKRFGTKCAACQQGIPPTQVVRRAQDFVYHLHCFACIVCKRQLATGDEYYLMEDSRLVCKADYETAKQREADSTAKRPRTTITAKQLETLKNAYNNSPKPARHVREQLSTETGLDMRVVQVWFQNRRAKEKRLKKDAGRQRWGQYFRNMKRSRGTSKSDKDSTQEDGMDSDAEVSFTDEPPMSDLGHSNGIYSSLSESSPALSRQGGNHPAFPLEHGAIIPSQEPYHDIQASSPYSLPQSPGPLQPLPRHQPLISSLVYPESGLPMAGQSGGQDMTPGVRMMAAGNGPSSDLSTGSSGGYPDFPASPASWLDEVDHAQF.

LIM zinc-binding domains are found at residues 28–78 (CAGC…CKDD) and 87–141 (CAAC…CKAD). A DNA-binding region (homeobox) is located at residues 154–213 (AKRPRTTITAKQLETLKNAYNNSPKPARHVREQLSTETGLDMRVVQVWFQNRRAKEKRLK). Disordered stretches follow at residues 208 to 294 (KEKR…FPLE) and 307 to 398 (DIQA…HAQF). A compositionally biased stretch (low complexity) spans 272 to 282 (SSLSESSPALS).

Its subcellular location is the nucleus. Functionally, transcription factor. The chain is LIM/homeobox protein Lhx3 (lhx3) from Danio rerio (Zebrafish).